A 748-amino-acid chain; its full sequence is Signal transducer and activator of transcription 4 (748 aa).

An SH2 domain is found at 569–664 (WIDGYVMGFV…ENPLKYLYPD (96 aa)). Lysine 667 carries the post-translational modification N6-acetyllysine. Tyrosine 693 is subject to Phosphotyrosine; by JAK. Residue serine 721 is modified to Phosphoserine; by MAP2K6.

The protein belongs to the transcription factor STAT family. As to quaternary structure, forms a homodimer or a heterodimer with a related family member. Interacts with ARL2BP. The SH2 domain interacts, in vitro, with IL12RB2 via a short cytoplasmic domain. Interacts with STAT1. Interacts with JUN; this complex efficiently interacts with the AP-1-related sequence of the IFN-gamma. Acetylation at Lys-667 is required for JAK2-mediated phosphorylation and activation of STAT4. In terms of processing, tyrosine phosphorylated upon IL12 and IFN-alpha activation, but not by IFN-gamma in T-lymphocytes and NK cells. Serine phosphorylation is required for maximal transcriptional activity but not for DNA binding. Phosphorylation by MAP2K6 at Ser-721 is required for full transcriptional activity induced by IL12. However this serine phosphorylation is not required for cell proliferation although critical for IFN-gamma production.

Its subcellular location is the cytoplasm. The protein localises to the nucleus. Transcriptional regulator mainly expressed in hematopoietic cells that plays a critical role in cellular growth, differentiation and immune response. Plays a key role in the differentiation of T-helper 1 cells and the production of interferon-gamma. Also participates in multiple neutrophil functions including chemotaxis and production of the neutrophil extracellular traps. After IL12 binding to its receptor IL12RB2, STAT4 interacts with the intracellular domain of IL12RB2 and becomes tyrosine phosphorylated. Phosphorylated STAT4 then homodimerizes and migrates to the nucleus where it can recognize STAT target sequences present in IL12 responsive genes. Although IL12 appears to be the predominant activating signal, STAT4 can also be phosphorylated and activated in response to IFN-gamma stimulation via JAK1 and TYK2 and in response to different interleukins including IL23, IL2 and IL35. Transcription activation of IFN-gamma gene is mediated by interaction with JUN that forms a complex that efficiently interacts with the AP-1-related sequence of the IFN-gamma promoter. In response to IFN-alpha/beta signaling, acts as a transcriptional repressor and suppresses IL5 and IL13 mRNA expression during response to T-cell receptor (TCR) activation. This chain is Signal transducer and activator of transcription 4 (STAT4), found in Homo sapiens (Human).